A 179-amino-acid chain; its full sequence is dCTP deaminase (179 aa).

Residues 101-106 (RSTLAR) and Asp-117 each bind dCTP. The active-site Proton donor/acceptor is the Glu-127. Residue Gln-165 coordinates dCTP.

Belongs to the dCTP deaminase family. In terms of assembly, homotrimer.

The catalysed reaction is dCTP + H2O + H(+) = dUTP + NH4(+). Its pathway is pyrimidine metabolism; dUMP biosynthesis; dUMP from dCTP (dUTP route): step 1/2. Catalyzes the deamination of dCTP to dUTP. This Caldivirga maquilingensis (strain ATCC 700844 / DSM 13496 / JCM 10307 / IC-167) protein is dCTP deaminase.